Here is a 356-residue protein sequence, read N- to C-terminus: Heme A synthase (356 aa).

Transmembrane regions (helical) follow at residues Ile23–Val43, Phe105–Leu125, Ile141–Val161, Ala173–Leu193, and Ser212–Ile232. His274 is a heme binding site. A run of 3 helical transmembrane segments spans residues Leu276–Pro296, Leu307–Val327, and Leu329–Val349. Heme is bound at residue His335.

The protein belongs to the COX15/CtaA family. Type 2 subfamily. Interacts with CtaB. It depends on heme b as a cofactor.

The protein resides in the cell membrane. It catalyses the reaction Fe(II)-heme o + 2 A + H2O = Fe(II)-heme a + 2 AH2. The protein operates within porphyrin-containing compound metabolism; heme A biosynthesis; heme A from heme O: step 1/1. Its function is as follows. Catalyzes the conversion of heme O to heme A by two successive hydroxylations of the methyl group at C8. The first hydroxylation forms heme I, the second hydroxylation results in an unstable dihydroxymethyl group, which spontaneously dehydrates, resulting in the formyl group of heme A. In Nitrosospira multiformis (strain ATCC 25196 / NCIMB 11849 / C 71), this protein is Heme A synthase.